A 427-amino-acid chain; its full sequence is Inward rectifier potassium channel 2 (427 aa).

Over Met-1–Trp-81 the chain is Cytoplasmic. Cys-76 is modified (S-nitrosocysteine). Residues Arg-82–Ile-106 form a helical membrane-spanning segment. Residues Ala-107–Ser-128 lie on the Extracellular side of the membrane. The segment at residues Phe-129–Gln-140 is an intramembrane region (helical; Pore-forming). Residues Thr-141–Phe-147 constitute an intramembrane region (pore-forming). The Selectivity filter motif lies at Thr-142 to Phe-147. At Arg-148–Ile-156 the chain is on the extracellular side. A helical membrane pass occupies residues Ala-157–Ala-178. Over Val-179–Ile-427 the chain is Cytoplasmic. Residues Ala-181–Leu-208 are polyphosphoinositide (PIP2)-binding. The disordered stretch occupies residues Ser-384–Ile-427. A PDZ-binding motif is present at residues Ser-425–Ile-427.

The protein belongs to the inward rectifier-type potassium channel (TC 1.A.2.1) family. KCNJ2 subfamily. In terms of assembly, homotetramer. Homomultimeric and heteromultimeric association with KCNJ4/Kir2.3. Can form heteromeric channels with Kir2.6/KCNJ18. Associates, via its PDZ-recognition domain, with a complex containing LIN7A, LIN7B, LIN7C, DLG1, CASK and APBA1. S-nitrosylation increases the open probability and inward rectifying currents.

Its subcellular location is the cell membrane. It is found in the sarcolemma. The protein resides in the T-tubule. The catalysed reaction is K(+)(in) = K(+)(out). With respect to regulation, activated by phosphatidylinositol 4,5 biphosphate (PtdIns(4,5)P2). Inward rectifier potassium channels are characterized by a greater tendency to allow potassium to flow into the cell rather than out of it. Their voltage dependence is regulated by the concentration of extracellular potassium; as external potassium is raised, the voltage range of the channel opening shifts to more positive voltages. The inward rectification is mainly due to the blockage of outward current by internal magnesium. Can be blocked by extracellular barium and cesium. Probably participates in establishing action potential waveform and excitability of neuronal and muscle tissues. In Sus scrofa (Pig), this protein is Inward rectifier potassium channel 2 (KCNJ2).